The following is a 380-amino-acid chain: Chorismate synthase (380 aa).

Residue arginine 48 coordinates NADP(+). Residues 126-128 (HFS), glycine 300, 315-319 (KPISS), and arginine 342 contribute to the FMN site.

The protein belongs to the chorismate synthase family. In terms of assembly, homotetramer. Requires FMNH2 as cofactor.

The catalysed reaction is 5-O-(1-carboxyvinyl)-3-phosphoshikimate = chorismate + phosphate. It participates in metabolic intermediate biosynthesis; chorismate biosynthesis; chorismate from D-erythrose 4-phosphate and phosphoenolpyruvate: step 7/7. Its function is as follows. Catalyzes the anti-1,4-elimination of the C-3 phosphate and the C-6 proR hydrogen from 5-enolpyruvylshikimate-3-phosphate (EPSP) to yield chorismate, which is the branch point compound that serves as the starting substrate for the three terminal pathways of aromatic amino acid biosynthesis. This reaction introduces a second double bond into the aromatic ring system. The protein is Chorismate synthase of Lancefieldella parvula (strain ATCC 33793 / DSM 20469 / CCUG 32760 / JCM 10300 / KCTC 3663 / VPI 0546 / 1246) (Atopobium parvulum).